A 248-amino-acid chain; its full sequence is ATP synthase subunit a, chloroplastic (248 aa).

The next 5 membrane-spanning stretches (helical) occupy residues 37–57 (AQVLITSWVVIVLLSGLAFVT), 96–116 (VPFIGTLFLFIFVSNWSGALF), 135–155 (INTTVALALLTSVAYFYAGLH), 200–220 (LVVAVLISLVPLVVPIPMMFL), and 221–241 (GLFTSAIQALIFATLAAAYIG).

Belongs to the ATPase A chain family. F-type ATPases have 2 components, CF(1) - the catalytic core - and CF(0) - the membrane proton channel. CF(1) has five subunits: alpha(3), beta(3), gamma(1), delta(1), epsilon(1). CF(0) has four main subunits: a, b, b' and c.

Its subcellular location is the plastid. It localises to the chloroplast thylakoid membrane. Key component of the proton channel; it plays a direct role in the translocation of protons across the membrane. This Psilotum nudum (Whisk fern) protein is ATP synthase subunit a, chloroplastic.